Consider the following 954-residue polypeptide: Kinesin-like protein KIN-7A (954 aa).

Residues 1 to 29 (MGVSRPPSTPASKIERTPMSTPTPGGSTR) are disordered. The span at 17-28 (TPMSTPTPGGST) shows a compositional bias: low complexity. A Kinesin motor domain is found at 34 to 354 (KIFVTVRVRP…LFFATCAKEV (321 aa)). 119–126 (GQTSSGKT) contributes to the ATP binding site. Coiled-coil stretches lie at residues 363-436 (VVSD…GDNQ) and 480-588 (LKHE…LVMS). 2 disordered regions span residues 624-689 (PNLI…SSVN) and 741-762 (GKTN…DGPD). Positions 630 to 639 (PCSPLSSSRP) are enriched in low complexity. 2 stretches are compositionally biased toward basic and acidic residues: residues 640-660 (LEPE…EGSE) and 666-681 (KSED…ETPR).

This sequence belongs to the TRAFAC class myosin-kinesin ATPase superfamily. Kinesin family. KIN-7 subfamily. Ubiquitous with a preferential expression in the shoot apical meristem (SAM).

In terms of biological role, may be essential to promote the progression of cytokinesis during node-internode differentiation. This Oryza sativa subsp. japonica (Rice) protein is Kinesin-like protein KIN-7A.